Here is an 876-residue protein sequence, read N- to C-terminus: Translation initiation factor IF-2 (876 aa).

Residues 378–547 (TRPPIITIMG…LTQSEMLELK (170 aa)) enclose the tr-type G domain. A G1 region spans residues 387–394 (GHVDHGKT). 387–394 (GHVDHGKT) lines the GTP pocket. The interval 412-416 (RITQH) is G2. The G3 stretch occupies residues 433–436 (DTPG). GTP is bound by residues 433–437 (DTPGH) and 487–490 (NKID). A G4 region spans residues 487-490 (NKID). Residues 523 to 525 (SAK) form a G5 region.

This sequence belongs to the TRAFAC class translation factor GTPase superfamily. Classic translation factor GTPase family. IF-2 subfamily.

The protein localises to the cytoplasm. Its function is as follows. One of the essential components for the initiation of protein synthesis. Protects formylmethionyl-tRNA from spontaneous hydrolysis and promotes its binding to the 30S ribosomal subunits. Also involved in the hydrolysis of GTP during the formation of the 70S ribosomal complex. In Buchnera aphidicola subsp. Baizongia pistaciae (strain Bp), this protein is Translation initiation factor IF-2.